Here is a 124-residue protein sequence, read N- to C-terminus: Heat-labile enterotoxin B chain (124 aa).

An N-terminal signal peptide occupies residues 1-21 (MNKVKCYVLFTALLSSLCAYG). Cysteines 30 and 107 form a disulfide.

Heterohexamer of one A chain and of five B chains.

Its function is as follows. The biological activity of the toxin is produced by the A chain, which activates intracellular adenyl cyclase. The sequence is that of Heat-labile enterotoxin B chain (eltB) from Escherichia coli O78:H11 (strain H10407 / ETEC).